Reading from the N-terminus, the 34-residue chain is Dermaseptin-H5 (34 aa).

In terms of tissue distribution, expressed by the skin glands.

Its subcellular location is the secreted. Functionally, has antimicrobial activity. This Pithecopus hypochondrialis (Orange-legged leaf frog) protein is Dermaseptin-H5.